Reading from the N-terminus, the 180-residue chain is Protein GrpE (180 aa).

The tract at residues 1 to 21 (MSEEVKEQNLPEVEPVQEAAS) is disordered.

This sequence belongs to the GrpE family. In terms of assembly, homodimer.

The protein resides in the cytoplasm. Its function is as follows. Participates actively in the response to hyperosmotic and heat shock by preventing the aggregation of stress-denatured proteins, in association with DnaK and GrpE. It is the nucleotide exchange factor for DnaK and may function as a thermosensor. Unfolded proteins bind initially to DnaJ; upon interaction with the DnaJ-bound protein, DnaK hydrolyzes its bound ATP, resulting in the formation of a stable complex. GrpE releases ADP from DnaK; ATP binding to DnaK triggers the release of the substrate protein, thus completing the reaction cycle. Several rounds of ATP-dependent interactions between DnaJ, DnaK and GrpE are required for fully efficient folding. The protein is Protein GrpE of Campylobacter concisus (strain 13826).